The sequence spans 580 residues: Negative elongation factor B (580 aa).

K519 carries the post-translational modification N6-acetyllysine. Residues 548–580 form a disordered region; sequence LEQLDHRKPSPAQAAETPALELPLPSVPAPAPL. S557 is modified (phosphoserine).

Belongs to the NELF-B family. The NELF complex is composed of NELFA, NELFB, NELFCD (isoform NELF-C or isoform NELF-D) and NELFE; the N-terminus of NELFB binds to the NELFA:NELFCD subcomplex. Binds RNA which may help to stabilize the NELF complex on nucleic acid. Interacts with the first BRCT repeat of BRCA1. Interacts with KIAA1191. Interacts with NELFE. As to expression, widely expressed. Expressed in heart, brain, lung, placenta, liver, skeletal muscle, kidney and pancreas.

It is found in the nucleus. Its function is as follows. Essential component of the NELF complex, a complex that negatively regulates the elongation of transcription by RNA polymerase II. The NELF complex, which acts via an association with the DSIF complex and causes transcriptional pausing, is counteracted by the P-TEFb kinase complex. May be able to induce chromatin unfolding. Essential for early embryogenesis; plays an important role in maintaining the undifferentiated state of embryonic stem cells (ESCs) by preventing unscheduled expression of developmental genes. Plays a key role in establishing the responsiveness of stem cells to developmental cues; facilitates plasticity and cell fate commitment in ESCs by establishing the appropriate expression level of signaling molecules. Supports the transcription of genes involved in energy metabolism in cardiomyocytes; facilitates the association of transcription initiation factors with the promoters of the metabolism-related genes. In terms of biological role, (Microbial infection) The NELF complex is involved in HIV-1 latency possibly involving recruitment of PCF11 to paused RNA polymerase II. In vitro, binds weakly to the HIV-1 TAR RNA which is located in the long terminal repeat (LTR) of HIV-1. The polypeptide is Negative elongation factor B (NELFB) (Homo sapiens (Human)).